The primary structure comprises 226 residues: Protein transport protein sec20 (226 aa).

The Cytoplasmic portion of the chain corresponds to 1–189 (MADVLNALEE…IKSLKLSDRS (189 aa)). The stretch at 53-75 (LRYEKAVQEYIRLNRRYRNKIAS) forms a coiled coil. S97 bears the Phosphoserine mark. The chain crosses the membrane as a helical; Anchor for type IV membrane protein span at residues 190–210 (DYFLVVSGFGFFIFVVVYLLF). Residues 211-226 (KRIVWPILSMFLWFLR) are Lumenal-facing.

Belongs to the SEC20 family. Component of a SNARE complex consisting of ufe1, sec20, sec22 and use1. Interacts with tip20 through its cytoplasmic domain.

The protein resides in the endoplasmic reticulum membrane. Its function is as follows. SNARE required for targeting and fusion of Golgi-derived retrograde transport vesicles with the ER. This is Protein transport protein sec20 from Schizosaccharomyces pombe (strain 972 / ATCC 24843) (Fission yeast).